The chain runs to 350 residues: Putative transport protein YdbI (350 aa).

The next 8 helical transmembrane spans lie at 18–38 (IFVV…LILL), 67–87 (VVIT…GFVF), 145–165 (ISTF…FLFE), 207–227 (FIIA…MHFP), 229–249 (LFGL…GVVI), 257–277 (IAYS…IFAI), 289–309 (LMSA…IFSE), and 311–331 (FFGI…LDIL).

This sequence belongs to the autoinducer-2 exporter (AI-2E) (TC 2.A.86) family.

It is found in the cell membrane. In Bacillus subtilis (strain 168), this protein is Putative transport protein YdbI (ydbI).